The chain runs to 448 residues: 3-phosphoshikimate 1-carboxyvinyltransferase (448 aa).

Positions 38, 39, and 43 each coordinate 3-phosphoshikimate. Position 38 (lysine 38) interacts with phosphoenolpyruvate. Glycine 111 and arginine 140 together coordinate phosphoenolpyruvate. 4 residues coordinate 3-phosphoshikimate: serine 185, glutamine 187, aspartate 335, and lysine 362. Glutamine 187 serves as a coordination point for phosphoenolpyruvate. The active-site Proton acceptor is the aspartate 335. Phosphoenolpyruvate is bound by residues arginine 366 and arginine 408.

This sequence belongs to the EPSP synthase family. In terms of assembly, monomer.

Its subcellular location is the cytoplasm. The enzyme catalyses 3-phosphoshikimate + phosphoenolpyruvate = 5-O-(1-carboxyvinyl)-3-phosphoshikimate + phosphate. Its pathway is metabolic intermediate biosynthesis; chorismate biosynthesis; chorismate from D-erythrose 4-phosphate and phosphoenolpyruvate: step 6/7. Functionally, catalyzes the transfer of the enolpyruvyl moiety of phosphoenolpyruvate (PEP) to the 5-hydroxyl of shikimate-3-phosphate (S3P) to produce enolpyruvyl shikimate-3-phosphate and inorganic phosphate. In Synechococcus elongatus (strain ATCC 33912 / PCC 7942 / FACHB-805) (Anacystis nidulans R2), this protein is 3-phosphoshikimate 1-carboxyvinyltransferase.